Consider the following 409-residue polypeptide: F-box/kelch-repeat protein At2g44130 (409 aa).

In terms of domain architecture, F-box spans 17 to 63 (HELIPGLPSELALECLVRVPFQFQSAMRSVCRSWRSLLSDSSFIQER). 4 Kelch repeats span residues 98-148 (KKSE…VLQD), 151-199 (KILL…SVSP), 201-248 (KVYV…AVGM), and 251-300 (RFCV…RTAG).

The sequence is that of F-box/kelch-repeat protein At2g44130 from Arabidopsis thaliana (Mouse-ear cress).